The primary structure comprises 369 residues: Melanoma-associated antigen 10 (369 aa).

The disordered stretch occupies residues 1 to 131 (MPRAPKRQRC…VLPDSESLPR (131 aa)). The span at 39–62 (SSSTSTSSSFPSSFPSSSSSSSSS) shows a compositional bias: low complexity. Composition is skewed to polar residues over residues 85–96 (QSAQIACSSPSV) and 107–121 (EGSSSQKEESPSTLQ). Residues 134–333 (IDEKVTDLVQ…RSFPLWYEEA (200 aa)) enclose the MAGE domain. The interval 340–369 (RAQDRIATTDDTTAMASASSSATGSFSYPE) is disordered. A compositionally biased stretch (low complexity) spans 348–369 (TDDTTAMASASSSATGSFSYPE).

As to expression, expressed in many tumors of several types, such as melanoma, head and neck squamous cell carcinoma, lung carcinoma and breast carcinoma, but not in normal tissues except for spermatogonia, spermatocytes and placenta.

Its subcellular location is the nucleus. In terms of biological role, not known, though may play a role in embryonal development and tumor transformation or aspects of tumor progression. The protein is Melanoma-associated antigen 10 (MAGEA10) of Homo sapiens (Human).